Reading from the N-terminus, the 411-residue chain is MDDAAKDLGRCAVVLPAGGCGERLGSLTPKQFCTVLGRPLISHTLEAFERASWIKDIIVVVASESLDLMKAIIHKYGHQRVTLVKGGETRHRSIFNGLKVFSENHSDDTAIDKPEVVIIHDAVRPFVDEDFLLQVAKSAKQHGAAGAIRPLVSTVIASSSDGFLDYSLERARHRASEMPQAFQYDVIYRAYLQCTDYDLDFGTECLHLALQYSNVKAKLLEGPPDLWKVTYKRDLYAAESVIKESISQQLCIVTNVKKEAIEVGFLLHENLKLHYKVKAVSSSMCKTIHHLQNIFHGQCCNFICINVKDLDFEETQNLVDLLQTTNASISYPLVIVSVHLTTEDSSSGNKLSGVRKLAKEAHKSNILVYGLLINIDQDKVQLQQTVCEGTAIITALIKDRNPALVGQLMVA.

Belongs to the IspD/TarI cytidylyltransferase family. IspD subfamily. Homodimer.

Its subcellular location is the cytoplasm. It is found in the cytosol. It catalyses the reaction D-ribitol 5-phosphate + CTP + H(+) = CDP-L-ribitol + diphosphate. The enzyme catalyses D-ribose 5-phosphate + CTP + H(+) = CDP-D-ribose + diphosphate. The catalysed reaction is D-ribulose 5-phosphate + CTP + H(+) = CDP-D-ribulose + diphosphate. It participates in protein modification; protein glycosylation. Cytidylyltransferase required for protein O-linked mannosylation. Catalyzes the formation of CDP-ribitol nucleotide sugar from D-ribitol 5-phosphate. CDP-ribitol is a substrate of FKTN during the biosynthesis of the phosphorylated O-mannosyl trisaccharide (N-acetylgalactosamine-beta-3-N-acetylglucosamine-beta-4-(phosphate-6-)mannose), a carbohydrate structure present in alpha-dystroglycan (DAG1), which is required for binding laminin G-like domain-containing extracellular proteins with high affinity. Shows activity toward other pentose phosphate sugars and mediates formation of CDP-ribulose or CDP-ribose using CTP and ribulose-5-phosphate or ribose-5-phosphate, respectively. Not involved in dolichol production. The polypeptide is D-ribitol-5-phosphate cytidylyltransferase (crppa) (Xenopus tropicalis (Western clawed frog)).